The following is a 287-amino-acid chain: Pyridoxal kinase PdxY (287 aa).

Residues Ser-9 and 44–45 (MQ) each bind substrate. Positions 111, 142, 147, and 180 each coordinate ATP. Residue Asp-221 coordinates substrate.

Belongs to the pyridoxine kinase family. PdxY subfamily. Homodimer. Mg(2+) serves as cofactor.

The catalysed reaction is pyridoxal + ATP = pyridoxal 5'-phosphate + ADP + H(+). It functions in the pathway cofactor metabolism; pyridoxal 5'-phosphate salvage; pyridoxal 5'-phosphate from pyridoxal: step 1/1. Functionally, pyridoxal kinase involved in the salvage pathway of pyridoxal 5'-phosphate (PLP). Catalyzes the phosphorylation of pyridoxal to PLP. The chain is Pyridoxal kinase PdxY from Burkholderia thailandensis (strain ATCC 700388 / DSM 13276 / CCUG 48851 / CIP 106301 / E264).